The following is a 230-amino-acid chain: Orotidine 5'-phosphate decarboxylase (230 aa).

Substrate is bound by residues aspartate 10, lysine 32, 59–68 (DLKFHDIPRT), threonine 116, arginine 177, glutamine 186, glycine 206, and arginine 207. The active-site Proton donor is lysine 61.

It belongs to the OMP decarboxylase family. Type 1 subfamily. As to quaternary structure, homodimer.

The catalysed reaction is orotidine 5'-phosphate + H(+) = UMP + CO2. It participates in pyrimidine metabolism; UMP biosynthesis via de novo pathway; UMP from orotate: step 2/2. Its function is as follows. Catalyzes the decarboxylation of orotidine 5'-monophosphate (OMP) to uridine 5'-monophosphate (UMP). In Methylacidiphilum infernorum (isolate V4) (Methylokorus infernorum (strain V4)), this protein is Orotidine 5'-phosphate decarboxylase.